The sequence spans 159 residues: SsrA-binding protein (159 aa).

This sequence belongs to the SmpB family.

Its subcellular location is the cytoplasm. Required for rescue of stalled ribosomes mediated by trans-translation. Binds to transfer-messenger RNA (tmRNA), required for stable association of tmRNA with ribosomes. tmRNA and SmpB together mimic tRNA shape, replacing the anticodon stem-loop with SmpB. tmRNA is encoded by the ssrA gene; the 2 termini fold to resemble tRNA(Ala) and it encodes a 'tag peptide', a short internal open reading frame. During trans-translation Ala-aminoacylated tmRNA acts like a tRNA, entering the A-site of stalled ribosomes, displacing the stalled mRNA. The ribosome then switches to translate the ORF on the tmRNA; the nascent peptide is terminated with the 'tag peptide' encoded by the tmRNA and targeted for degradation. The ribosome is freed to recommence translation, which seems to be the essential function of trans-translation. The chain is SsrA-binding protein from Salinispora tropica (strain ATCC BAA-916 / DSM 44818 / JCM 13857 / NBRC 105044 / CNB-440).